The primary structure comprises 351 residues: MNPPKSAPDAQGLSYRDAGVDIDAGDALIDKIKPFAKKTLRDGVLGGIGGFGALFEVPKKYKEPVLVSGTDGVGTKLKLAFHLNKHDTVGQDLVAMSVNDILVQGAEPLFFLDYFACGKLDVDTAATVVKGIAQGCELSGCALIGGETAEMPGMYPDGEYDLAGFAVGAVEKSKIIDGSTIAEGDVVLGLASSGIHSNGFSLVRKIIERANPDLSADFHGRSLADALMAPTRIYVKPLLALMQKLSVKGMAHITGGGLVENIPRVLRDGLTAELDQNAWPLPPLFKWLQEHGGVADAEMHRVFNCGIGMAVIVSAADADAAIADLTAAGEQVWKIGTVRATREGEAQTVVV.

The protein belongs to the AIR synthase family.

It is found in the cytoplasm. It catalyses the reaction 2-formamido-N(1)-(5-O-phospho-beta-D-ribosyl)acetamidine + ATP = 5-amino-1-(5-phospho-beta-D-ribosyl)imidazole + ADP + phosphate + H(+). It participates in purine metabolism; IMP biosynthesis via de novo pathway; 5-amino-1-(5-phospho-D-ribosyl)imidazole from N(2)-formyl-N(1)-(5-phospho-D-ribosyl)glycinamide: step 2/2. This Burkholderia cenocepacia (strain HI2424) protein is Phosphoribosylformylglycinamidine cyclo-ligase.